A 983-amino-acid chain; its full sequence is Nitrate reductase [NADPH] (983 aa).

Low complexity-rich tracts occupy residues 1-14 (MTIS…SSKT) and 26-48 (SSSS…SSPT). The disordered stretch occupies residues 1–50 (MTISTTSSSTSSKTSSEKGDDLKGFSSSSSPASSRSSSATTPEPSSPTVL). A Mo-molybdopterin-binding site is contributed by cysteine 184. A Cytochrome b5 heme-binding domain is found at 585–662 (DTIITAADLA…LRDFHLGRLE (78 aa)). Residues histidine 622 and histidine 645 each contribute to the heme site. One can recognise an FAD-binding FR-type domain in the interval 688-815 (KKWRATRLVS…KGPLGSFTYL (128 aa)). FAD contacts are provided by residues 746–749 (RAYT), 763–767 (LIKVY), phenylalanine 768, phenylalanine 780, 784–786 (KMT), serine 841, and threonine 844. NADP(+) is bound at residue 952 to 961 (LALVCGPPPM).

It belongs to the nitrate reductase family. In terms of assembly, homodimer. FAD serves as cofactor. The cofactor is heme. Requires Mo-molybdopterin as cofactor.

The catalysed reaction is nitrite + NADP(+) + H2O = nitrate + NADPH + H(+). Its pathway is nitrogen metabolism; nitrate reduction (assimilation). Nitrate reductase is a key enzyme involved in the first step of nitrate assimilation in plants, fungi and bacteria. This is Nitrate reductase [NADPH] (NAR1) from Mycosarcoma maydis (Corn smut fungus).